The primary structure comprises 1071 residues: MKLIYTEMSYSMTEILVNEARKAADQGYRVFYIAPNSLSFEKEREVLTLLPERGTFSIIVTRFVQMSRYFTVESSPSKQHLDDTTLAMIFYRALMQLKPEDLPSYGRLQNNSVFIEQLVELYKELKNAQLSVHDLTGLDHPQKQEDLIKIIELAETIMIQQDYNQDSPLQSFARAIKLGLLNNQLSKTVVVIDGFSRFSAEEDYLLSLLNNNCQEVIIGSYVSQKAYQKSFIKGNIYEASLHFLQDLAQKYHIKPVFATSNQVFKPAFSRLTQLFEATHDFSQVDWQLQKSDLDHFSLWQCHHQKEEIEHVAKSIRQKLYEGYRYKDILVLLGDMDAYQLQIGPIFDKFEIPYYLGKAEPMAAHPLVQFIESLERSQRYNWRREDILNMLKSGLFGCFDDSDIDRFEEYTQFADIKGFTKFSKPFTINSSRQYPLDFLNEMRQDIVLPLQELFKSQKQLGASLVDKLILFLKKIRLAENMQGLAQSQLEVEKNEEVWKRFTDILTSFHHIFGQEKLRLSDCLALIKTGMKSAQYRVVPATLDVVTIKSYDLVQPHSKPFVYAIGLTQSHFPKQIHHSGLLSDQERARINEIRNYRHFDIASAENSKKNHQTALSLFNAATKELVLSVSTVINETFDDLSPYLKELINFGLPLLDKGKNYLSYDNSDIGNYKALLSQIIAINRQDLIEMSDQDKMFWTVVLRYLRKQLRKQQLELPTSDYRLSTKPLSKEVIEVCFPKGIPLKLSATALTVFYNNQYNYFLKYVLNLNKTESIHPDSRIHGQYLHRVFERLMKDHTQEPFDNKLKQAIYHTNQESFFQQVYQDNAEAEYSLAILEDIVRSTAPILQLNQNIQVIDQEKNFQLDMGNEILVHGIIDRIDQLSDGSLGIVDYKSSANQFDIGTFYNGLSPQLMTYLAALKQIAPHDINQLFGAMYLHLQDPKLDLVTFKQIDNTLVESIYKALTYKGIFSEVEKEHLSTGAYQTKNALYSNDELETLLNYNKYLYLKAAKHIKKGHFLINPYTSDGKTVQGDQLKAITRFEADLDMGQARRLVTLPAKEKKECFLTLMRKESHL.

The protein belongs to the helicase family. AddB/RexB type 2 subfamily. In terms of assembly, heterodimer of AddA and RexB. Mg(2+) serves as cofactor.

Its function is as follows. The heterodimer acts as both an ATP-dependent DNA helicase and an ATP-dependent, dual-direction single-stranded exonuclease. Recognizes the chi site generating a DNA molecule suitable for the initiation of homologous recombination. This subunit has 5' -&gt; 3' nuclease activity but not helicase activity. The polypeptide is ATP-dependent helicase/deoxyribonuclease subunit B (Streptococcus pyogenes serotype M1).